We begin with the raw amino-acid sequence, 420 residues long: LanC-like protein 3 (420 aa).

Belongs to the LanC-like protein family.

In Homo sapiens (Human), this protein is LanC-like protein 3 (LANCL3).